The chain runs to 952 residues: Inter-alpha-trypsin inhibitor heavy chain H5 (952 aa).

A signal peptide spans 1–17 (MLLLLGLCLGLPLFSES). The region spanning 35-161 (VPRQLRLLQR…KAAFFLSYEE (127 aa)) is the VIT domain. N-linked (GlcNAc...) asparagine glycans are attached at residues asparagine 97, asparagine 127, asparagine 136, and asparagine 231. Basic and acidic residues predominate over residues 113–131 (QKDKKSSESVKDKRNRTSD). Residues 113–138 (QKDKKSSESVKDKRNRTSDDNEENGS) form a disordered region. The region spanning 295-478 (NVVFVLDISA…AQLIGFYDEI (184 aa)) is the VWFA domain. N-linked (GlcNAc...) asparagine glycosylation is found at asparagine 508, asparagine 776, asparagine 795, and asparagine 862. The interval 933–952 (ALGLSTPRKPETDRPHEESV) is disordered. Positions 940 to 952 (RKPETDRPHEESV) are enriched in basic and acidic residues.

It belongs to the ITIH family.

The protein localises to the secreted. Its function is as follows. May act as a tumor suppressor. This chain is Inter-alpha-trypsin inhibitor heavy chain H5 (Itih5), found in Mus musculus (Mouse).